Here is a 418-residue protein sequence, read N- to C-terminus: Histidine--tRNA ligase (418 aa).

Belongs to the class-II aminoacyl-tRNA synthetase family. Homodimer.

The protein resides in the cytoplasm. It carries out the reaction tRNA(His) + L-histidine + ATP = L-histidyl-tRNA(His) + AMP + diphosphate + H(+). This is Histidine--tRNA ligase from Dehalococcoides mccartyi (strain ATCC BAA-2100 / JCM 16839 / KCTC 5957 / BAV1).